The sequence spans 175 residues: Inosine/xanthosine triphosphatase (175 aa).

Position 8–13 (8–13 (TTNPAK)) interacts with substrate. Mg(2+) is bound by residues Asp-38 and Glu-68. 68 to 69 (EA) is a binding site for substrate.

It belongs to the YjjX NTPase family. Homodimer. Requires Mg(2+) as cofactor. Mn(2+) serves as cofactor.

It carries out the reaction XTP + H2O = XDP + phosphate + H(+). The enzyme catalyses ITP + H2O = IDP + phosphate + H(+). Its function is as follows. Phosphatase that hydrolyzes non-canonical purine nucleotides such as XTP and ITP to their respective diphosphate derivatives. Probably excludes non-canonical purines from DNA/RNA precursor pool, thus preventing their incorporation into DNA/RNA and avoiding chromosomal lesions. The protein is Inosine/xanthosine triphosphatase of Yersinia enterocolitica serotype O:8 / biotype 1B (strain NCTC 13174 / 8081).